The sequence spans 2449 residues: Nonribisomal peptide synthetase phqB (2449 aa).

Residues 253–654 (IQVHSGPGRL…GRRDTVVKIR (402 aa)) are adenylation 1. The Carrier 1 domain occupies 795–870 (LPMTPNEDVL…LRTVAKEARP (76 aa)). Residue serine 815 is modified to O-(pantetheine 4'-phosphoryl)serine. Positions 913 to 1337 (QDIYPTTPLQ…LISDRDSELL (425 aa)) are condensation 1. Residues 1357–1756 (EAQVTRNPSK…TFTFLGRTNQ (400 aa)) form an adenylation 2 region. Residues 1915-1993 (WALSKHIGQL…MVAEMIDRTP (79 aa)) form the Carrier 2 domain. At serine 1952 the chain carries O-(pantetheine 4'-phosphoryl)serine. The tract at residues 2041–2297 (LTGATGFLGT…VAAVDWVASL (257 aa)) is reductase (R) domain. The NADPH site is built by threonine 2045, methionine 2249, and asparagine 2259.

It belongs to the NRP synthetase family.

The protein operates within alkaloid biosynthesis. Functionally, nonribisomal peptide synthetase; part of the gene cluster that mediates the biosynthesis of paraherquamide, a fungal indole alkaloid that belongs to a family of natural products containing a characteristic bicyclo[2.2.2]diazaoctane core. The first steps in the biosynthesis of paraherquamide is the production of the beta-methyl-proline precursor from L-isoleucine. They require oxidation of a terminally hydroxylated L-isoleucine to the corresponding aldehyde by enzymes which have still to be identified. Spontaneous cyclization and dehydration would yield the 4-methyl pyrolline-5-carboxylic acid, which is then reduced by the pyrroline-5-carboxylate reductase phqD leading to the beta-methyl-proline precursor. The next step of paraherquamide biosynthesis involves coupling of beta-methyl-proline and L-tryptophan by the bimodular NRPS phqB, to produce a monooxopiperazine intermediate. The reductase (R) domain of phqB utilizes NADPH for hydride transfer to reduce the thioester bond of the T domain-tethered linear dipeptide to a hemithioaminal intermediate, which spontaneously cleaves the C-S bond to release the aldehyde product. This compound undergoes spontaneous cyclization and dehydration to give a dienamine which is reverse prenylated at C-2 by the reverse prenyltransferase phqJ. The other prenyltransferase present in the cluster, phqI may be a redundant gene in the pathway. During biosynthetic assembly, the key step to produce the polycyclic core is catalyzed by the bifunctional reductase and intramolecular [4+2] Diels-Alderase, phqE, resulting in formation of the [2.2.2] diazaoctane intermediate preparaherquamide. Following formation of preparaherquamide, an indole 2,3-epoxidation-initiated pinacol-like rearrangement is catalyzed by the phqK FAD-dependent monooxygenase. The prenyltransferase phqA, the cytochrome P450 monooxygenase phqL, and the FAD-linked oxidoreductase phqH (or the cytochrome P450 monooxygenase phqM), are proposed to be involved in the formation of the pyran ring. The FAD-dependent monooxygenase phqK is likely responsible for generation of the spiro-oxindole, and the N-methylation is likely mediated by the phqN methyltransferase leading to the isolable natural product paraherquamide F. However, the order of these biosynthetic steps has still to be determined. In late-stage paraherquamide biosynthesis, the third P450 monooxygenase, phqO, is probably responsible for the C-14 hydroxylation, transforming paraherquamide F to paraherquamide G, and paraherquamide E to the final product paraherquamide A. The expansion from the 6-membered ring pyran (in paraherquamides F and G) to the 7-membered dioxepin ring (in paraherquamides A and E) represents a poorly understood but intriguing process that probably involves the 2-oxoglutarate-dependent dioxygenase phqC. Finally, the remaining members of the paraherquamide cluster, including phqI as well as phqM (or phqH), do not have a clearly prescribed role and appear to be redundant. The polypeptide is Nonribisomal peptide synthetase phqB (Penicillium fellutanum).